The sequence spans 333 residues: HPr kinase/phosphorylase (333 aa).

Catalysis depends on residues histidine 155 and lysine 176. 170 to 177 lines the ATP pocket; sequence GKSGLGKS. Serine 177 serves as a coordination point for Mg(2+). Catalysis depends on aspartate 194, which acts as the Proton acceptor; for phosphorylation activity. Proton donor; for dephosphorylation activity. The segment at 219 to 228 is important for the catalytic mechanism of both phosphorylation and dephosphorylation; sequence MEIRGLGVVD. Residue glutamate 220 participates in Mg(2+) binding. Residue arginine 261 is part of the active site. The segment at 282-287 is important for the catalytic mechanism of dephosphorylation; that stretch reads PILPGK.

The protein belongs to the HPrK/P family. As to quaternary structure, homohexamer. Mg(2+) serves as cofactor.

It catalyses the reaction [HPr protein]-L-serine + ATP = [HPr protein]-O-phospho-L-serine + ADP + H(+). The catalysed reaction is [HPr protein]-O-phospho-L-serine + phosphate + H(+) = [HPr protein]-L-serine + diphosphate. Catalyzes the ATP- as well as the pyrophosphate-dependent phosphorylation of a specific serine residue in HPr, a phosphocarrier protein of the phosphoenolpyruvate-dependent sugar phosphotransferase system (PTS). HprK/P also catalyzes the pyrophosphate-producing, inorganic phosphate-dependent dephosphorylation (phosphorolysis) of seryl-phosphorylated HPr (P-Ser-HPr). This is HPr kinase/phosphorylase from Chlorobium chlorochromatii (strain CaD3).